A 581-amino-acid chain; its full sequence is Serine/threonine protein phosphatase 2A 55 kDa regulatory subunit B alpha isoform (581 aa).

Residues 1 to 27 (MMNPDGGDGDRLEAAGAGSSSAQQGHP) form a disordered region. Residues 14-25 (AAGAGSSSAQQG) are compositionally biased toward low complexity. WD repeat units lie at residues 47 to 86 (QEVD…DNAS) and 123 to 164 (EIEE…VKQV). A compositionally biased stretch (low complexity) spans 172 to 189 (RSVGTGTSSSASTSSSRG). The interval 172-192 (RSVGTGTSSSASTSSSRGLLP) is disordered. 4 WD repeats span residues 241-279 (AHDY…QSFN), 290-330 (DLTE…LCDN), 349-387 (EIIA…GPVS), and 492-530 (DFST…RKFI).

This sequence belongs to the phosphatase 2A regulatory subunit B family. PP2A consists of a common heteromeric enzyme, composed of a catalytic subunit (subunits C), a constant regulatory subunit (subunit A), and a variety of regulatory subunits such as subunits B (the R2/B/PR55/B55, R3/B''/PR72/PR130/PR59 and R5/B'/B56 families).

Functionally, the B regulatory subunit may modulate substrate selectivity and catalytic activity, and may also direct the localization of the catalytic enzyme to a particular subcellular compartment. The chain is Serine/threonine protein phosphatase 2A 55 kDa regulatory subunit B alpha isoform from Oryza sativa subsp. japonica (Rice).